The sequence spans 147 residues: uncharacterized protein (147 aa).

Disordered regions lie at residues 1–49 and 125–147; these read MRTP…NLNE and SPSPTTSFNSTNPQNTHQTRKSN. Low complexity-rich tracts occupy residues 8-49 and 125-140; these read NNNY…NLNE and SPSPTTSFNSTNPQNT.

This is an uncharacterized protein from Dictyostelium discoideum (Social amoeba).